Reading from the N-terminus, the 830-residue chain is Penicillin-binding protein 1A (830 aa).

Topologically, residues 1-18 (MGKKKKKRKSSAFKIILN) are cytoplasmic. A helical; Signal-anchor for type II membrane protein membrane pass occupies residues 19-39 (VFLSIFLVAGVAFGGIVFAMI). Over 40-830 (KTAPPLNVQQ…QNHEDNKNKQ (791 aa)) the chain is Extracellular. Residues 57–229 (SILYDDKGQY…PSVYYPYSSA (173 aa)) form a transglycosylase region. The Proton donor; for transglycosylase activity role is filled by Glu-96. The tract at residues 357-641 (ASAVIMDYHN…AARLWGDIMK (285 aa)) is transpeptidase. Ser-398 functions as the Acyl-ester intermediate; for transpeptidase activity in the catalytic mechanism. The interval 754-830 (GGSLPPTEEK…QNHEDNKNKQ (77 aa)) is disordered. Positions 760–786 (TEEKNNSNTRDKNKDKNKNKNKDKNPS) are enriched in basic and acidic residues. A compositionally biased stretch (low complexity) spans 787 to 820 (QDKPNNNNNDNNSNNNNNNNDNNNNTKPPENDSN). Residues 821 to 830 (QNHEDNKNKQ) are compositionally biased toward basic and acidic residues.

In the N-terminal section; belongs to the glycosyltransferase 51 family. The protein in the C-terminal section; belongs to the transpeptidase family.

It is found in the cell membrane. The enzyme catalyses [GlcNAc-(1-&gt;4)-Mur2Ac(oyl-L-Ala-gamma-D-Glu-L-Lys-D-Ala-D-Ala)](n)-di-trans,octa-cis-undecaprenyl diphosphate + beta-D-GlcNAc-(1-&gt;4)-Mur2Ac(oyl-L-Ala-gamma-D-Glu-L-Lys-D-Ala-D-Ala)-di-trans,octa-cis-undecaprenyl diphosphate = [GlcNAc-(1-&gt;4)-Mur2Ac(oyl-L-Ala-gamma-D-Glu-L-Lys-D-Ala-D-Ala)](n+1)-di-trans,octa-cis-undecaprenyl diphosphate + di-trans,octa-cis-undecaprenyl diphosphate + H(+). The catalysed reaction is Preferential cleavage: (Ac)2-L-Lys-D-Ala-|-D-Ala. Also transpeptidation of peptidyl-alanyl moieties that are N-acyl substituents of D-alanine.. Its pathway is cell wall biogenesis; peptidoglycan biosynthesis. Cell wall formation. Synthesis of cross-linked peptidoglycan from the lipid intermediates. The enzyme has a penicillin-insensitive transglycosylase N-terminal domain (formation of linear glycan strands) and a penicillin-sensitive transpeptidase C-terminal domain (cross-linking of the peptide subunits). This chain is Penicillin-binding protein 1A (pbpA), found in Clostridium botulinum (strain Hall / ATCC 3502 / NCTC 13319 / Type A).